Reading from the N-terminus, the 219-residue chain is 2-hydroxy-3-keto-5-methylthiopentenyl-1-phosphate phosphatase (219 aa).

It belongs to the HAD-like hydrolase superfamily. MtnX family.

The catalysed reaction is 2-hydroxy-5-methylsulfanyl-3-oxopent-1-enyl phosphate + H2O = 1,2-dihydroxy-5-(methylsulfanyl)pent-1-en-3-one + phosphate. Its pathway is amino-acid biosynthesis; L-methionine biosynthesis via salvage pathway; L-methionine from S-methyl-5-thio-alpha-D-ribose 1-phosphate: step 4/6. Its function is as follows. Dephosphorylates 2-hydroxy-3-keto-5-methylthiopentenyl-1-phosphate (HK-MTPenyl-1-P) yielding 1,2-dihydroxy-3-keto-5-methylthiopentene (DHK-MTPene). This is 2-hydroxy-3-keto-5-methylthiopentenyl-1-phosphate phosphatase from Bacillus cereus (strain ATCC 14579 / DSM 31 / CCUG 7414 / JCM 2152 / NBRC 15305 / NCIMB 9373 / NCTC 2599 / NRRL B-3711).